The primary structure comprises 251 residues: tRNA (guanine-N(1)-)-methyltransferase (251 aa).

S-adenosyl-L-methionine-binding positions include Gly-117 and 137-142 (IGDYVL).

Belongs to the RNA methyltransferase TrmD family. As to quaternary structure, homodimer.

The protein resides in the cytoplasm. The catalysed reaction is guanosine(37) in tRNA + S-adenosyl-L-methionine = N(1)-methylguanosine(37) in tRNA + S-adenosyl-L-homocysteine + H(+). Functionally, specifically methylates guanosine-37 in various tRNAs. The chain is tRNA (guanine-N(1)-)-methyltransferase from Actinobacillus pleuropneumoniae serotype 5b (strain L20).